The following is a 590-amino-acid chain: MAFGYSPSYCSFWRTLLGLYCLFTLVHTVISTPPEDPVKCVSGNTNCIVTNSLGAFPDRSTCRAANVAYPTTEAELVSIVAAATKAGRKMRVTTRYSHSIPKLTCTDGNDGLFISTKFLNHTVQADAKAMTLTVESGVTLRQLIAEAAKVGLALPYAPYWWGVTVGGMMGTGAHGSSLWGKGSAVHDYVTEIRMVSPGSVNDGFAKIRVLSETTTPNEFNAAKVSLGVLGVISQVTFELQPMFKRSLKYVMRNDLDFNDEALTFGKKHEFADFVWLPSQGKVVYRMDDRVAVNTLGNGLYDFFPFRSQLSAVLATTRSSEETQETLRDAHGKCVTATTISSTLFSTSYGLTNNGITFTGYPVIGSQNRMMSSGSCLDGLEDKLTSACAWDSRVKGVFYHQTTFSIPLTQVKSFINDIKSLLKIDSKSLCGLELYYGILMRYVTSSPAYLGKETEAIDFDITYYRANDPLTPRLYEDFIEEIEQIALLKYNALPHWGKNRNLAFDGVIKKYKNAPAFLKVKESYDPNGLFSSEWTDQILGIKGNPTIVKDGCALEGLCICSDDAHCAPSKGYLCRPGKVYKEARVCTHVPK.

An N-terminal signal peptide occupies residues 1–31 (MAFGYSPSYCSFWRTLLGLYCLFTLVHTVIS). Positions 60–242 (STCRAANVAY…SQVTFELQPM (183 aa)) constitute an FAD-binding PCMH-type domain.

The protein belongs to the oxygen-dependent FAD-linked oxidoreductase family. FAD is required as a cofactor.

It catalyses the reaction L-gulono-1,4-lactone + O2 = L-ascorbate + H2O2 + H(+). Its pathway is cofactor biosynthesis; L-ascorbate biosynthesis. Functionally, catalyzes the oxidation of L-gulono-1,4-lactone to ascorbic acid. L-gulono-1,4-lactone is oxidized to hydrogen peroxide and L-xylo-hexulonolactone which spontaneously isomerizes to L-ascorbate. The polypeptide is L-gulonolactone oxidase 5 (Arabidopsis thaliana (Mouse-ear cress)).